The sequence spans 351 residues: Foldase protein PrsA 1 (351 aa).

The signal sequence occupies residues 1 to 22; sequence MKNSNKLIASVVTLASVMALAA. The N-palmitoyl cysteine moiety is linked to residue Cys-23. Cys-23 carries the S-diacylglycerol cysteine lipid modification. The region spanning 145–240 is the PpiC domain; sequence TPTMAVEMIT…KKFYIVKVTK (96 aa). Low complexity-rich tracts occupy residues 303–317 and 326–351; these read KTKAASESSTTSESS and ESEQTQTSSAEEPTETEAQTQEPAAQ. A disordered region spans residues 303–351; sequence KTKAASESSTTSESSKAAEENPSESEQTQTSSAEEPTETEAQTQEPAAQ.

The protein belongs to the PrsA family.

Its subcellular location is the cell membrane. The enzyme catalyses [protein]-peptidylproline (omega=180) = [protein]-peptidylproline (omega=0). Plays a major role in protein secretion by helping the post-translocational extracellular folding of several secreted proteins. The sequence is that of Foldase protein PrsA 1 from Streptococcus pyogenes serotype M6 (strain ATCC BAA-946 / MGAS10394).